A 375-amino-acid chain; its full sequence is S-adenosylmethionine:tRNA ribosyltransferase-isomerase (375 aa).

This sequence belongs to the QueA family. As to quaternary structure, monomer.

The protein localises to the cytoplasm. It carries out the reaction 7-aminomethyl-7-carbaguanosine(34) in tRNA + S-adenosyl-L-methionine = epoxyqueuosine(34) in tRNA + adenine + L-methionine + 2 H(+). Its pathway is tRNA modification; tRNA-queuosine biosynthesis. Functionally, transfers and isomerizes the ribose moiety from AdoMet to the 7-aminomethyl group of 7-deazaguanine (preQ1-tRNA) to give epoxyqueuosine (oQ-tRNA). This chain is S-adenosylmethionine:tRNA ribosyltransferase-isomerase, found in Rickettsia typhi (strain ATCC VR-144 / Wilmington).